A 443-amino-acid chain; its full sequence is Glucose-6-phosphate isomerase (443 aa).

Glutamate 285 functions as the Proton donor in the catalytic mechanism. Catalysis depends on residues histidine 306 and lysine 420.

Belongs to the GPI family.

The protein localises to the cytoplasm. The catalysed reaction is alpha-D-glucose 6-phosphate = beta-D-fructose 6-phosphate. It participates in carbohydrate biosynthesis; gluconeogenesis. Its pathway is carbohydrate degradation; glycolysis; D-glyceraldehyde 3-phosphate and glycerone phosphate from D-glucose: step 2/4. Functionally, catalyzes the reversible isomerization of glucose-6-phosphate to fructose-6-phosphate. The chain is Glucose-6-phosphate isomerase from Staphylococcus aureus (strain USA300).